We begin with the raw amino-acid sequence, 326 residues long: MQTALLKPKIIAVEPLGDHHAKVVMEPFERGYGHTLGNALRRVLLSSMVGYAPTEVTIAGVVHEYSTIDGVQEDVVNLLLNLKGVVFKLHNRDEVTVSLRKDGEGVVTAADIELPHDVEIINPNHVIAHLSAGGKLDMQIKVEQGRGYVPGNVRKFGDESGKVIGRIVLDASFSPVRRVSYAVESARVEQRTDLDKLVMNIETDGVISPEEAIRQSARILVDQLSVFAALEGTESAAEAASSRTPQIDPILLRPVDDLELTVRSANCLKAENIYYIGDLIQRTENELLKTPNLGRKSLNEIKEVLASRGLTLGMKLENWPPAGLEK.

Residues 1 to 231 (MQTALLKPKI…DQLSVFAALE (231 aa)) are alpha N-terminal domain (alpha-NTD). The segment at 247-326 (IDPILLRPVD…ENWPPAGLEK (80 aa)) is alpha C-terminal domain (alpha-CTD).

This sequence belongs to the RNA polymerase alpha chain family. As to quaternary structure, homodimer. The RNAP catalytic core consists of 2 alpha, 1 beta, 1 beta' and 1 omega subunit. When a sigma factor is associated with the core the holoenzyme is formed, which can initiate transcription.

The catalysed reaction is RNA(n) + a ribonucleoside 5'-triphosphate = RNA(n+1) + diphosphate. Functionally, DNA-dependent RNA polymerase catalyzes the transcription of DNA into RNA using the four ribonucleoside triphosphates as substrates. The sequence is that of DNA-directed RNA polymerase subunit alpha from Cupriavidus necator (strain ATCC 17699 / DSM 428 / KCTC 22496 / NCIMB 10442 / H16 / Stanier 337) (Ralstonia eutropha).